Reading from the N-terminus, the 477-residue chain is Ribulose bisphosphate carboxylase large chain (477 aa).

A propeptide spanning residues 1 to 2 (MS) is cleaved from the precursor. Position 3 is an N-acetylproline (Pro3). Lys14 is modified (N6,N6,N6-trimethyllysine). Residues Asn123 and Thr173 each coordinate substrate. Residue Lys175 is the Proton acceptor of the active site. Position 177 (Lys177) interacts with substrate. Residues Lys201, Asp203, and Glu204 each contribute to the Mg(2+) site. An N6-carboxylysine modification is found at Lys201. Catalysis depends on His294, which acts as the Proton acceptor. Positions 295, 327, and 379 each coordinate substrate.

Belongs to the RuBisCO large chain family. Type I subfamily. In terms of assembly, heterohexadecamer of 8 large chains and 8 small chains; disulfide-linked. The disulfide link is formed within the large subunit homodimers. It depends on Mg(2+) as a cofactor. In terms of processing, the disulfide bond which can form in the large chain dimeric partners within the hexadecamer appears to be associated with oxidative stress and protein turnover.

It is found in the plastid. Its subcellular location is the chloroplast. It carries out the reaction 2 (2R)-3-phosphoglycerate + 2 H(+) = D-ribulose 1,5-bisphosphate + CO2 + H2O. It catalyses the reaction D-ribulose 1,5-bisphosphate + O2 = 2-phosphoglycolate + (2R)-3-phosphoglycerate + 2 H(+). Functionally, ruBisCO catalyzes two reactions: the carboxylation of D-ribulose 1,5-bisphosphate, the primary event in carbon dioxide fixation, as well as the oxidative fragmentation of the pentose substrate in the photorespiration process. Both reactions occur simultaneously and in competition at the same active site. This Nicotiana acuminata (Acuminate tobacco) protein is Ribulose bisphosphate carboxylase large chain.